A 129-amino-acid polypeptide reads, in one-letter code: Small ribosomal subunit protein uS11 (129 aa).

It belongs to the universal ribosomal protein uS11 family. Part of the 30S ribosomal subunit. Interacts with proteins S7 and S18. Binds to IF-3.

Its function is as follows. Located on the platform of the 30S subunit, it bridges several disparate RNA helices of the 16S rRNA. Forms part of the Shine-Dalgarno cleft in the 70S ribosome. The sequence is that of Small ribosomal subunit protein uS11 from Aliivibrio fischeri (strain ATCC 700601 / ES114) (Vibrio fischeri).